A 634-amino-acid chain; its full sequence is Threonine--tRNA ligase (634 aa).

One can recognise a TGS domain in the interval Met-1–Thr-61. The segment at Asp-241 to Pro-532 is catalytic. Zn(2+) contacts are provided by Cys-332, His-383, and His-509.

Belongs to the class-II aminoacyl-tRNA synthetase family. In terms of assembly, homodimer. It depends on Zn(2+) as a cofactor.

The protein localises to the cytoplasm. The enzyme catalyses tRNA(Thr) + L-threonine + ATP = L-threonyl-tRNA(Thr) + AMP + diphosphate + H(+). Functionally, catalyzes the attachment of threonine to tRNA(Thr) in a two-step reaction: L-threonine is first activated by ATP to form Thr-AMP and then transferred to the acceptor end of tRNA(Thr). Also edits incorrectly charged L-seryl-tRNA(Thr). The sequence is that of Threonine--tRNA ligase from Francisella tularensis subsp. tularensis (strain WY96-3418).